The primary structure comprises 156 residues: Bacterial microcompartment shell protein PduK (156 aa).

The BMC domain occupies 4 to 89 (SLGLLEVSGL…PGDGILSHSV (86 aa)). Positions 81-119 (GDGILSHSVTPESESEPAPAPTPVVPHEEIPEDHAAPEA) are disordered. A compositionally biased stretch (basic and acidic residues) spans 106–116 (PHEEIPEDHAA).

This sequence belongs to the bacterial microcompartments protein family. Interacts with shell protein PduA and assembly protein PduM. Interacts with PduP, probably with its first 18 residues. It depends on Fe cation as a cofactor.

It is found in the bacterial microcompartment. The protein operates within polyol metabolism; 1,2-propanediol degradation. A minor shell protein of the bacterial microcompartment (BMC) dedicated to 1,2-propanediol (1,2-PD) degradation. Functionally, expression of a cosmid containing the full 21-gene pdu operon in E.coli allows E.coli to grow on 1,2-propanediol (1,2-PD) with the appearance of bacterial microcompartments (BMC) in its cytoplasm. Overexpression of this protein leads to the appearance of a single large aggregate complex in the cytoplasm. Its function is as follows. The 1,2-PD-specific bacterial microcompartment (BMC) concentrates low levels of 1,2-PD catabolic enzymes, concentrates volatile reaction intermediates thus enhancing pathway flux and keeps the level of toxic, mutagenic propionaldehyde low. The sequence is that of Bacterial microcompartment shell protein PduK from Citrobacter freundii.